Reading from the N-terminus, the 144-residue chain is Putative RNase YutE (144 aa).

The active site involves Arg96. The RX(4)HXY motif signature appears at 96–103 (RKTLVQQY).

The protein belongs to the HepT RNase toxin family. As to quaternary structure, homodimer, probably forms a complex with cognate antitoxin YutD.

In terms of biological role, probable toxic component of a putative type VII toxin-antitoxin (TA) system, probably an RNase. Probably neutralized by cognate antitoxin YutD. The sequence is that of Putative RNase YutE (yutE) from Bacillus subtilis (strain 168).